Here is a 212-residue protein sequence, read N- to C-terminus: Imidazole glycerol phosphate synthase subunit HisH (212 aa).

One can recognise a Glutamine amidotransferase type-1 domain in the interval 1-211; it reads MIGVIDYGMG…TKMAAEQQVK (211 aa). Cys-79 functions as the Nucleophile in the catalytic mechanism. Residues His-186 and Glu-188 contribute to the active site.

As to quaternary structure, heterodimer of HisH and HisF.

The protein resides in the cytoplasm. It catalyses the reaction 5-[(5-phospho-1-deoxy-D-ribulos-1-ylimino)methylamino]-1-(5-phospho-beta-D-ribosyl)imidazole-4-carboxamide + L-glutamine = D-erythro-1-(imidazol-4-yl)glycerol 3-phosphate + 5-amino-1-(5-phospho-beta-D-ribosyl)imidazole-4-carboxamide + L-glutamate + H(+). It carries out the reaction L-glutamine + H2O = L-glutamate + NH4(+). It participates in amino-acid biosynthesis; L-histidine biosynthesis; L-histidine from 5-phospho-alpha-D-ribose 1-diphosphate: step 5/9. IGPS catalyzes the conversion of PRFAR and glutamine to IGP, AICAR and glutamate. The HisH subunit catalyzes the hydrolysis of glutamine to glutamate and ammonia as part of the synthesis of IGP and AICAR. The resulting ammonia molecule is channeled to the active site of HisF. In Bacillus velezensis (strain DSM 23117 / BGSC 10A6 / LMG 26770 / FZB42) (Bacillus amyloliquefaciens subsp. plantarum), this protein is Imidazole glycerol phosphate synthase subunit HisH.